Consider the following 239-residue polypeptide: Ribonuclease PH (239 aa).

Residues Arg86 and 124-126 each bind phosphate; that span reads GTR.

This sequence belongs to the RNase PH family. Homohexameric ring arranged as a trimer of dimers.

The catalysed reaction is tRNA(n+1) + phosphate = tRNA(n) + a ribonucleoside 5'-diphosphate. In terms of biological role, phosphorolytic 3'-5' exoribonuclease that plays an important role in tRNA 3'-end maturation. Removes nucleotide residues following the 3'-CCA terminus of tRNAs; can also add nucleotides to the ends of RNA molecules by using nucleoside diphosphates as substrates, but this may not be physiologically important. Probably plays a role in initiation of 16S rRNA degradation (leading to ribosome degradation) during starvation. The sequence is that of Ribonuclease PH from Psychromonas ingrahamii (strain DSM 17664 / CCUG 51855 / 37).